Reading from the N-terminus, the 82-residue chain is Small ribosomal subunit protein uS17 (82 aa).

This sequence belongs to the universal ribosomal protein uS17 family. Part of the 30S ribosomal subunit.

One of the primary rRNA binding proteins, it binds specifically to the 5'-end of 16S ribosomal RNA. This Shewanella denitrificans (strain OS217 / ATCC BAA-1090 / DSM 15013) protein is Small ribosomal subunit protein uS17.